Reading from the N-terminus, the 122-residue chain is Small ribosomal subunit protein uS10y (122 aa).

It belongs to the universal ribosomal protein uS10 family.

The chain is Small ribosomal subunit protein uS10y (RPS20B) from Arabidopsis thaliana (Mouse-ear cress).